Reading from the N-terminus, the 66-residue chain is MNLTFFGLCLACMGVSLAEGMLMNGLFKSAARQPDIIPQLRSLMIMGIAFIEGTFLVTLVFSFVIK.

The next 2 helical transmembrane spans lie at 3-23 and 45-65; these read LTFFGLCLACMGVSLAEGMLM and IMGIAFIEGTFLVTLVFSFVI.

Belongs to the ATPase C chain family. F-type ATPases have 2 components, F(1) - the catalytic core - and F(0) - the membrane proton channel. F(1) has five subunits: alpha(3), beta(3), gamma(1), delta(1), epsilon(1). F(0) has three main subunits: a(1), b(2) and c(10-14). The alpha and beta chains form an alternating ring which encloses part of the gamma chain. F(1) is attached to F(0) by a central stalk formed by the gamma and epsilon chains, while a peripheral stalk is formed by the delta and b chains.

The protein resides in the cell membrane. F(1)F(0) ATP synthase produces ATP from ADP in the presence of a proton or sodium gradient. F-type ATPases consist of two structural domains, F(1) containing the extramembraneous catalytic core and F(0) containing the membrane proton channel, linked together by a central stalk and a peripheral stalk. During catalysis, ATP synthesis in the catalytic domain of F(1) is coupled via a rotary mechanism of the central stalk subunits to proton translocation. Functionally, key component of the F(0) channel; it plays a direct role in translocation across the membrane. A homomeric c-ring of between 10-14 subunits forms the central stalk rotor element with the F(1) delta and epsilon subunits. This chain is ATP synthase subunit c (atpE), found in Streptococcus oralis.